Here is a 212-residue protein sequence, read N- to C-terminus: Imidazole glycerol phosphate synthase subunit HisH (212 aa).

One can recognise a Glutamine amidotransferase type-1 domain in the interval 2 to 212; the sequence is LTAIIDYESG…MIGNFLTWTP (211 aa). Catalysis depends on Cys87, which acts as the Nucleophile. Residues His192 and Glu194 contribute to the active site.

Heterodimer of HisH and HisF.

It is found in the cytoplasm. It catalyses the reaction 5-[(5-phospho-1-deoxy-D-ribulos-1-ylimino)methylamino]-1-(5-phospho-beta-D-ribosyl)imidazole-4-carboxamide + L-glutamine = D-erythro-1-(imidazol-4-yl)glycerol 3-phosphate + 5-amino-1-(5-phospho-beta-D-ribosyl)imidazole-4-carboxamide + L-glutamate + H(+). It carries out the reaction L-glutamine + H2O = L-glutamate + NH4(+). The protein operates within amino-acid biosynthesis; L-histidine biosynthesis; L-histidine from 5-phospho-alpha-D-ribose 1-diphosphate: step 5/9. IGPS catalyzes the conversion of PRFAR and glutamine to IGP, AICAR and glutamate. The HisH subunit catalyzes the hydrolysis of glutamine to glutamate and ammonia as part of the synthesis of IGP and AICAR. The resulting ammonia molecule is channeled to the active site of HisF. The protein is Imidazole glycerol phosphate synthase subunit HisH of Ruegeria pomeroyi (strain ATCC 700808 / DSM 15171 / DSS-3) (Silicibacter pomeroyi).